Here is a 29-residue protein sequence, read N- to C-terminus: Cyclotide vibi-D (29 aa).

The cyclopeptide (Gly-Asn) cross-link spans 1 to 29 (GLPVCGETCFGGRCNTPGCTCSYPICTRN). 3 disulfides stabilise this stretch: cysteine 5/cysteine 19, cysteine 9/cysteine 21, and cysteine 14/cysteine 26.

This is a cyclic peptide.

Probably participates in a plant defense mechanism. Has moderate levels of cytotoxic activity, active against a human lymphoma cell line with an IC(50) of &gt;30 uM. This Viola biflora (Yellow wood violet) protein is Cyclotide vibi-D.